Consider the following 527-residue polypeptide: Arginine--tRNA ligase (527 aa).

The 'HIGH' region signature appears at 111–121; the sequence is ANPTGPLHIGH.

It belongs to the class-I aminoacyl-tRNA synthetase family. Monomer.

The protein localises to the cytoplasm. The enzyme catalyses tRNA(Arg) + L-arginine + ATP = L-arginyl-tRNA(Arg) + AMP + diphosphate. The chain is Arginine--tRNA ligase from Campylobacter concisus (strain 13826).